The primary structure comprises 520 residues: Cyclin-L2 (520 aa).

N-acetylalanine is present on alanine 2. Cyclin-like stretches follow at residues 83–185 and 198–282; these read ELIQ…RVLK and KIIV…KILQ. The disordered stretch occupies residues 316–520; sequence LPGGTQVLDG…DHPGHSRHRR (205 aa). Phosphoserine is present on residues serine 330, serine 338, serine 348, and serine 351. The span at 357–367 shows a compositional bias: basic and acidic residues; sequence RRLEGAKKAKA. A Phosphoserine modification is found at serine 369. Residues 376–390 are compositionally biased toward basic and acidic residues; that stretch reads KGRESRSRSRSREQS. Positions 385-423 are RS; the sequence is RSREQSYSRSPSRSASPKRRKSDSGSTSGGSKSQSRSRS. The segment covering 408–436 has biased composition (low complexity); it reads SGSTSGGSKSQSRSRSRSDSPPRQAPRSA. Residues 441–454 show a composition bias toward basic and acidic residues; that stretch reads SEIRGSRKSKDCKY. Over residues 456-471 the composition is skewed to basic residues; sequence QKPHKSRSRSSSRSRS. Basic and acidic residues-rich tracts occupy residues 472 to 481 and 489 to 514; these read RSRERADNPG and YYRD…DHPG.

The protein belongs to the cyclin family. Cyclin L subfamily. In terms of assembly, interacts with CDK11A, CDK11B, CDK12, CDK13 and POLR2A, the hyperphosphorylated C-terminal domain (CTD) of RNA polymerase II. May form a ternary complex with CDK11B and casein kinase II (CKII). Interacts with pre-mRNA-splicing factors, including at least SRSF1, SRSF2 AND SRSF7/SLU7. Widely expressed.

It is found in the nucleus speckle. The protein resides in the nucleus. It localises to the nucleoplasm. In terms of biological role, involved in pre-mRNA splicing. May induce cell death, possibly by acting on the transcription and RNA processing of apoptosis-related factors. This is Cyclin-L2 (CCNL2) from Homo sapiens (Human).